A 67-amino-acid chain; its full sequence is Alpha-conotoxin-like Pu1.1 (67 aa).

The N-terminal stretch at 1–21 (MGMRMMFTVFLLVVLATTVVS) is a signal peptide. A propeptide spanning residues 22-46 (FTSDRTSDGRNAAFNAFDLIALTAR) is cleaved from the precursor. Residue Gln-47 is modified to Pyrrolidone carboxylic acid. 2 disulfides stabilise this stretch: Cys-49–Cys-55 and Cys-50–Cys-63. Residues 51-53 (NVP) are lacks the Ser-Xaa-Pro motif that is crucial for potent interaction with nAChR. Residue Cys-63 is modified to Cysteine amide.

Belongs to the conotoxin A superfamily. Expressed by the venom duct.

Its subcellular location is the secreted. Functionally, alpha-conotoxins act on postsynaptic membranes, they bind to the nicotinic acetylcholine receptors (nAChR) and thus inhibit them. Has possibly a distinct nAChR binding mode from other alpha-conotoxins, due to a different three residue motif (lacks the Ser-Xaa-Pro motif). In Conus pulicarius (Flea-bitten cone), this protein is Alpha-conotoxin-like Pu1.1.